Reading from the N-terminus, the 64-residue chain is Conotoxin Cal6.24 (64 aa).

Positions 1–22 are cleaved as a signal peptide; that stretch reads MKLTCVMIVAVLVLTVCKVVTS. 3 cysteine pairs are disulfide-bonded: Cys32–Cys50, Cys40–Cys54, and Cys49–Cys60.

Expressed by the venom duct.

The protein localises to the secreted. Functionally, probable neurotoxin. This is Conotoxin Cal6.24 from Californiconus californicus (California cone).